The sequence spans 328 residues: Cytochrome c biogenesis protein CcsA (328 aa).

The next 8 membrane-spanning stretches (helical) occupy residues 13-33 (ISFSVVSIVLIIYFLTLLVNL), 46-66 (GIIITFFGITGLLLTRWIFSG), 73-93 (LYESLIFLSWAFSIIHMVSYF), 101-121 (LNAITAPSAIFIQGFATSGLL), 146-166 (MILGYGALLCGSLLSIALLVI), 234-254 (IISLGFIFLTVGILSGAVWAN), 263-283 (WDPKETWAFITWTIFAIYLHI), and 295-315 (AIVASIGFLLIWICYFGVNLL).

Belongs to the CcmF/CycK/Ccl1/NrfE/CcsA family. May interact with Ccs1.

It localises to the plastid. It is found in the chloroplast thylakoid membrane. In terms of biological role, required during biogenesis of c-type cytochromes (cytochrome c6 and cytochrome f) at the step of heme attachment. This chain is Cytochrome c biogenesis protein CcsA, found in Olimarabidopsis pumila (Dwarf rocket).